The chain runs to 207 residues: Glutathione S-transferase 4 (207 aa).

In terms of domain architecture, GST N-terminal spans 2–79; the sequence is PNYKLLYFDA…YLARKFGLAG (78 aa). Glutathione-binding positions include tyrosine 8, tryptophan 39, lysine 43, 49–51, and 63–64; these read GQL and QS. In terms of domain architecture, GST C-terminal spans 81 to 207; that stretch reads TAEEEAYADS…YVATRKDSIV (127 aa).

It belongs to the GST superfamily. Sigma family.

The enzyme catalyses RX + glutathione = an S-substituted glutathione + a halide anion + H(+). Its function is as follows. Conjugation of reduced glutathione to a wide number of exogenous and endogenous hydrophobic electrophiles. May play a role in the detoxification of reactive oxygen species produced during pathogenic bacterial infection. This Caenorhabditis elegans protein is Glutathione S-transferase 4.